The chain runs to 206 residues: Protein Nef (206 aa).

Gly2 carries the N-myristoyl glycine; by host lipid modification. Ser6 is subject to Phosphoserine; by host. The interval 62 to 65 is acidic; interacts with host PACS1 and PACS2; stabilizes the interaction of NEF/MHC-I with host AP1M1; necessary for MHC-I internalization; that stretch reads EEEE. An SH3-binding; interaction with Src family tyrosine kinases region spans residues 69-78; sequence PVTPQVPLRP. Residues 72 to 75 carry the PxxP; stabilizes the interaction of NEF/MHC-I with host AP1M1; necessary for MHC-I internalization motif; that stretch reads PQVP. Positions 108-124 are mediates dimerization, Nef-PTE1 interaction; sequence DILDLWIYHTQGYFPDW. Residues 148–180 form a binding to ATP6V1H region; it reads VEPEKLEEANKGENTSLLHPVSLHGMDDPEREV. The Dileucine internalization motif; necessary for CD4 internalization signature appears at 164 to 165; the sequence is LL. Positions 174 to 175 match the Diacidic; necessary for CD4 internalization motif; it reads DD.

This sequence belongs to the lentivirus primate group Nef protein family. In terms of assembly, monomer; cytosolic form. Homodimer; membrane bound form. Interacts with Nef associated p21-activated kinase (PAK2); this interaction activates PAK2. Associates with the Nef-MHC-I-AP1 complex; this complex is required for MHC-I internalization. Interacts (via C-terminus) with host PI3-kinase. Interacts with host PACS1; this interaction seems to be weak. Interacts with host PACS2. Interacts with host LCK and MAPK3; these interactions inhibit the kinase activity of the latter. Interacts with host ATP6V1H; this interaction may play a role in CD4 endocytosis. Associates with the CD4-Nef-AP2 complex; this complex is required for CD4 internalization. Interacts with host AP2 subunit alpha and AP2 subunit sigma2. Interacts with TCR-zeta chain; this interaction up-regulates the Fas ligand (FasL) surface expression. Interacts with host HCK, LYN, and SRC; these interactions activate the Src family kinases. Interacts with MAP3K5; this interaction inhibits the Fas and TNFR-mediated death signals. Interacts with beta-COP and PTE1. Interacts with human RACK1; this increases Nef phosphorylation by PKC. Interacts with TP53; this interaction decreases the half-life of TP53, protecting the infected cell against p53-mediated apoptosis. In terms of processing, the virion-associated Nef proteins are cleaved by the viral protease to release the soluble C-terminal core protein. Nef is probably cleaved concomitantly with viral structural proteins on maturation of virus particles. Myristoylated. Post-translationally, phosphorylated on serine residues, probably by host PKCdelta and theta.

It is found in the host cell membrane. It localises to the virion. The protein resides in the secreted. Its subcellular location is the host Golgi apparatus membrane. Its function is as follows. Factor of infectivity and pathogenicity, required for optimal virus replication. Alters numerous pathways of T-lymphocyte function and down-regulates immunity surface molecules in order to evade host defense and increase viral infectivity. Alters the functionality of other immunity cells, like dendritic cells, monocytes/macrophages and NK cells. Functionally, in infected CD4(+) T-lymphocytes, down-regulates the surface MHC-I, mature MHC-II, CD4, CD28, CCR5 and CXCR4 molecules. Mediates internalization and degradation of host CD4 through the interaction of with the cytoplasmic tail of CD4, the recruitment of AP-2 (clathrin adapter protein complex 2), internalization through clathrin coated pits, and subsequent transport to endosomes and lysosomes for degradation. Diverts host MHC-I molecules to the trans-Golgi network-associated endosomal compartments by an endocytic pathway to finally target them for degradation. MHC-I down-regulation may involve AP-1 (clathrin adapter protein complex 1) or possibly Src family kinase-ZAP70/Syk-PI3K cascade recruited by PACS2. In consequence infected cells are masked for immune recognition by cytotoxic T-lymphocytes. Decreasing the number of immune receptors also prevents reinfection by more HIV particles (superinfection). Down-regulates host SERINC3 and SERINC5 thereby excluding these proteins from the viral particles. Virion infectivity is drastically higher when SERINC3 or SERINC5 are excluded from the viral envelope, because these host antiviral proteins impair the membrane fusion event necessary for subsequent virion penetration. In terms of biological role, bypasses host T-cell signaling by inducing a transcriptional program nearly identical to that of anti-CD3 cell activation. Interaction with TCR-zeta chain up-regulates the Fas ligand (FasL). Increasing surface FasL molecules and decreasing surface MHC-I molecules on infected CD4(+) cells send attacking cytotoxic CD8+ T-lymphocytes into apoptosis. Plays a role in optimizing the host cell environment for viral replication without causing cell death by apoptosis. Protects the infected cells from apoptosis in order to keep them alive until the next virus generation is ready to strike. Inhibits the Fas and TNFR-mediated death signals by blocking MAP3K5/ASK1. Decreases the half-life of TP53, protecting the infected cell against p53-mediated apoptosis. Inhibits the apoptotic signals regulated by the Bcl-2 family proteins through the formation of a Nef/PI3-kinase/PAK2 complex that leads to activation of PAK2 and induces phosphorylation of host BAD. Its function is as follows. Extracellular Nef protein targets CD4(+) T-lymphocytes for apoptosis by interacting with CXCR4 surface receptors. The protein is Protein Nef of Human immunodeficiency virus type 1 group M subtype B (isolate LW123) (HIV-1).